Here is a 497-residue protein sequence, read N- to C-terminus: 3-octaprenyl-4-hydroxybenzoate carboxy-lyase (497 aa).

Position 172 (asparagine 172) interacts with Mn(2+). Prenylated FMN is bound by residues 175–177 (IYR), 189–191 (RWL), and 194–195 (RG). Position 238 (glutamate 238) interacts with Mn(2+). The Proton donor role is filled by aspartate 287.

Belongs to the UbiD family. In terms of assembly, homohexamer. Prenylated FMN serves as cofactor. Requires Mn(2+) as cofactor.

It is found in the cell membrane. It catalyses the reaction a 4-hydroxy-3-(all-trans-polyprenyl)benzoate + H(+) = a 2-(all-trans-polyprenyl)phenol + CO2. It functions in the pathway cofactor biosynthesis; ubiquinone biosynthesis. Functionally, catalyzes the decarboxylation of 3-octaprenyl-4-hydroxy benzoate to 2-octaprenylphenol, an intermediate step in ubiquinone biosynthesis. The polypeptide is 3-octaprenyl-4-hydroxybenzoate carboxy-lyase (Enterobacter sp. (strain 638)).